The primary structure comprises 145 residues: Histone H2B (145 aa).

Residues 1-52 form a disordered region; that stretch reads MAPKAAAGKKPAEKKPVEEKKAEEVPAEKKPKAGKKLPKDAGRPDKKKKRAK. K9, K35, and K36 each carry N6-acetyllysine. A compositionally biased stretch (basic and acidic residues) spans 10–44; sequence KPAEKKPVEEKKAEEVPAEKKPKAGKKLPKDAGRP. Residue K141 forms a Glycyl lysine isopeptide (Lys-Gly) (interchain with G-Cter in ubiquitin) linkage.

Belongs to the histone H2B family. As to quaternary structure, the nucleosome is a histone octamer containing two molecules each of H2A, H2B, H3 and H4 assembled in one H3-H4 heterotetramer and two H2A-H2B heterodimers. The octamer wraps approximately 147 bp of DNA. Post-translationally, can be acetylated to form H2BK6ac, H2BK33ac and H2BK34ac. In terms of processing, monoubiquitinated to form H2BK143ub1; may give a specific tag for epigenetic transcriptional activation. In anthers, floral buds, pollen, petals and fruits.

It is found in the nucleus. The protein resides in the chromosome. Its function is as follows. Core component of nucleosome. Nucleosomes wrap and compact DNA into chromatin, limiting DNA accessibility to the cellular machineries which require DNA as a template. Histones thereby play a central role in transcription regulation, DNA repair, DNA replication and chromosomal stability. DNA accessibility is regulated via a complex set of post-translational modifications of histones, also called histone code, and nucleosome remodeling. The polypeptide is Histone H2B (HIS2B) (Capsicum annuum (Capsicum pepper)).